The following is a 356-amino-acid chain: MSQVHRILNCRGTRIHAVADSPPDQQGPLVVLLHGFPESWYSWRHQIPALAGAGYRVVAIDQRGYGRSSKYRVQKAYRIKELVGDVVGVLDSYGAEQAFVVGHDWGAPVAWTFAWLHPDRCAGVVGISVPFAGRGVIGLPGSPFGERRPSDYHLELAGPGRVWYQDYFAVQDGIITEIEEDLRGWLLGLTYTVSGEGMMAATKAAVDAGVDLESMDPIDVIRAGPLCMAEGARLKDAFVYPETMPAWFTEADLDFYTGEFERSGFGGPLSFYHNIDNDWHDLADQQGKPLTPPALFIGGQYDVGTIWGAQAIERAHEVMPNYRGTHMIADVGHWIQQEAPEETNRLLLDFLGGLRP.

One can recognise an AB hydrolase-1 domain in the interval 28 to 129; that stretch reads PLVVLLHGFP…RCAGVVGISV (102 aa). Asp104 (nucleophile) is an active-site residue. The active-site Proton acceptor is the His333.

This sequence belongs to the AB hydrolase superfamily. Epoxide hydrolase family. As to quaternary structure, homodimer.

The enzyme catalyses an epoxide + H2O = an ethanediol. Functionally, could be involved in detoxification of extraneous host-cell epoxides. Catalyzes the hydrolysis of small aromatic epoxide-containing substrates such as trans-1,3-diphenylpropene oxide, trans and cis-stilbene oxide, and terpenoid epoxide. This chain is Epoxide hydrolase B, found in Mycobacterium tuberculosis (strain CDC 1551 / Oshkosh).